A 301-amino-acid chain; its full sequence is UDP-3-O-acyl-N-acetylglucosamine deacetylase (301 aa).

Positions 81, 237, and 241 each coordinate Zn(2+). Residue histidine 264 is the Proton donor of the active site.

Belongs to the LpxC family. The cofactor is Zn(2+).

It carries out the reaction a UDP-3-O-[(3R)-3-hydroxyacyl]-N-acetyl-alpha-D-glucosamine + H2O = a UDP-3-O-[(3R)-3-hydroxyacyl]-alpha-D-glucosamine + acetate. It participates in glycolipid biosynthesis; lipid IV(A) biosynthesis; lipid IV(A) from (3R)-3-hydroxytetradecanoyl-[acyl-carrier-protein] and UDP-N-acetyl-alpha-D-glucosamine: step 2/6. Catalyzes the hydrolysis of UDP-3-O-myristoyl-N-acetylglucosamine to form UDP-3-O-myristoylglucosamine and acetate, the committed step in lipid A biosynthesis. The sequence is that of UDP-3-O-acyl-N-acetylglucosamine deacetylase from Leptospira borgpetersenii serovar Hardjo-bovis (strain JB197).